A 470-amino-acid chain; its full sequence is Phosphoribosylamine--glycine ligase (470 aa).

In terms of domain architecture, ATP-grasp spans lysine 115 to glutamate 354. Arginine 142–alanine 203 contacts ATP. Residues glutamate 324 and asparagine 326 each coordinate Mg(2+).

Belongs to the GARS family. Mg(2+) serves as cofactor. Requires Mn(2+) as cofactor.

It carries out the reaction 5-phospho-beta-D-ribosylamine + glycine + ATP = N(1)-(5-phospho-beta-D-ribosyl)glycinamide + ADP + phosphate + H(+). The protein operates within purine metabolism; IMP biosynthesis via de novo pathway; N(1)-(5-phospho-D-ribosyl)glycinamide from 5-phospho-alpha-D-ribose 1-diphosphate: step 2/2. This is Phosphoribosylamine--glycine ligase (purD) from Archaeoglobus fulgidus (strain ATCC 49558 / DSM 4304 / JCM 9628 / NBRC 100126 / VC-16).